The sequence spans 277 residues: Urease accessory protein UreD (277 aa).

The protein belongs to the UreD family. In terms of assembly, ureD, UreF and UreG form a complex that acts as a GTP-hydrolysis-dependent molecular chaperone, activating the urease apoprotein by helping to assemble the nickel containing metallocenter of UreC. The UreE protein probably delivers the nickel.

It is found in the cytoplasm. In terms of biological role, required for maturation of urease via the functional incorporation of the urease nickel metallocenter. The chain is Urease accessory protein UreD from Pseudomonas putida (strain W619).